A 717-amino-acid chain; its full sequence is ATP-dependent RNA helicase homolog DQX1 (717 aa).

The Helicase ATP-binding domain maps to 57 to 225; that stretch reads QLESNPTGVV…WGNPPIVHIP (169 aa). 70–77 contributes to the ATP binding site; it reads GEPGSGKS. Positions 170–173 match the DEAQ box motif; that stretch reads DEAQ. Positions 248–447 constitute a Helicase C-terminal domain; that stretch reads ACQAVLELCR…ALMQALEDLD (200 aa). The segment at 694–717 is disordered; it reads GMADSTAGSKSSSAQEFRDPCVLQ. Residues 699–708 are compositionally biased toward polar residues; it reads TAGSKSSSAQ.

It is found in the nucleus. In terms of biological role, might be involved in RNA metabolism; it is missing helicase motif III and may not have helicase activity. This Homo sapiens (Human) protein is ATP-dependent RNA helicase homolog DQX1 (DQX1).